A 201-amino-acid polypeptide reads, in one-letter code: Superoxide dismutase [Mn] (201 aa).

Residues H27, H81, D163, and H167 each coordinate Mn(2+).

The protein belongs to the iron/manganese superoxide dismutase family. In terms of assembly, homodimer. Mn(2+) serves as cofactor.

Its subcellular location is the secreted. The enzyme catalyses 2 superoxide + 2 H(+) = H2O2 + O2. Functionally, destroys superoxide anion radicals which are normally produced within the cells and which are toxic to biological systems. The protein is Superoxide dismutase [Mn] (sodA) of Streptococcus pyogenes serotype M6 (strain ATCC BAA-946 / MGAS10394).